Reading from the N-terminus, the 101-residue chain is Small ribosomal subunit protein uS14 (101 aa).

This sequence belongs to the universal ribosomal protein uS14 family. As to quaternary structure, part of the 30S ribosomal subunit. Contacts proteins S3 and S10.

In terms of biological role, binds 16S rRNA, required for the assembly of 30S particles and may also be responsible for determining the conformation of the 16S rRNA at the A site. The sequence is that of Small ribosomal subunit protein uS14 from Shewanella loihica (strain ATCC BAA-1088 / PV-4).